The sequence spans 75 residues: Small ribosomal subunit protein bS18 (75 aa).

It belongs to the bacterial ribosomal protein bS18 family. In terms of assembly, part of the 30S ribosomal subunit. Forms a tight heterodimer with protein bS6.

In terms of biological role, binds as a heterodimer with protein bS6 to the central domain of the 16S rRNA, where it helps stabilize the platform of the 30S subunit. This Buchnera aphidicola subsp. Schizaphis graminum (strain Sg) protein is Small ribosomal subunit protein bS18.